A 231-amino-acid chain; its full sequence is UPF0173 metal-dependent hydrolase AF_1265 (231 aa).

This sequence belongs to the UPF0173 family.

This is UPF0173 metal-dependent hydrolase AF_1265 from Archaeoglobus fulgidus (strain ATCC 49558 / DSM 4304 / JCM 9628 / NBRC 100126 / VC-16).